A 179-amino-acid polypeptide reads, in one-letter code: Natural killer cells antigen CD94 (179 aa).

Topologically, residues 1-10 (MAVSRITRWR) are cytoplasmic. A helical; Signal-anchor for type II membrane protein transmembrane segment spans residues 11 to 31 (LMSVIFGIKCLFLMVTLGVLL). The Extracellular portion of the chain corresponds to 32 to 179 (INSFTIQNIQ…NRYICKKLPI (148 aa)). 4 disulfides stabilise this stretch: Cys58/Cys70, Cys61/Cys72, Cys89/Cys174, and Cys152/Cys166. The C-type lectin domain occupies 68 to 175 (HQCNCYFISK…CENKNRYICK (108 aa)). N-linked (GlcNAc...) asparagine glycans are attached at residues Asn93 and Asn109.

Can form disulfide-bonded heterodimer with NKG2 family members KLRC1 and KLRC2. KLRD1-KLRC1 heterodimer interacts with peptide-bound MHC-E-B2M heterotrimeric complex. KLRD1 plays a prominent role in directly interacting with MHC-E. KLRD1-KLRC1 interacts with much higher affinity with peptide-bound MHC-E-B2M than KLRD1-KLRC2. Interacts with the adapter protein TYROBP/DAP12; this interaction is required for cell surface expression and cell activation.

The protein resides in the cell membrane. In terms of biological role, immune receptor involved in self-nonself discrimination. In complex with KLRC1 or KLRC2 on cytotoxic and regulatory lymphocyte subsets, recognizes non-classical major histocompatibility (MHC) class Ib molecule MHC-E loaded with self-peptides derived from the signal sequence of classical MHC class Ia and non-classical MHC class Ib molecules. Enables cytotoxic cells to monitor the expression of MHC class I molecules in healthy cells and to tolerate self. Primarily functions as a ligand binding subunit as it lacks the capacity to signal. Its function is as follows. KLRD1-KLRC1 acts as an immune inhibitory receptor. Key inhibitory receptor on natural killer (NK) cells that regulates their activation and effector functions. Dominantly counteracts T cell receptor signaling on a subset of memory/effector CD8-positive T cells as part of an antigen-driven response to avoid autoimmunity. On intraepithelial CD8-positive gamma-delta regulatory T cells triggers TGFB1 secretion, which in turn limits the cytotoxic programming of intraepithelial CD8-positive alpha-beta T cells, distinguishing harmless from pathogenic antigens. In MHC-E-rich tumor microenvironment, acts as an immune inhibitory checkpoint and may contribute to progressive loss of effector functions of NK cells and tumor-specific T cells, a state known as cell exhaustion. Upon MHC-E-peptide binding, transmits intracellular signals through KLRC1 immunoreceptor tyrosine-based inhibition motifs (ITIMs) by recruiting INPP5D/SHIP-1 and INPPL1/SHIP-2 tyrosine phosphatases to ITIMs, and ultimately opposing signals transmitted by activating receptors through dephosphorylation of proximal signaling molecules. Functionally, KLRD1-KLRC2 acts as an immune activating receptor. On cytotoxic lymphocyte subsets recognizes MHC-E loaded with signal sequence-derived peptides from non-classical MHC class Ib MHC-G molecules, likely playing a role in the generation and effector functions of adaptive NK cells and in maternal-fetal tolerance during pregnancy. Regulates the effector functions of terminally differentiated cytotoxic lymphocyte subsets, and in particular may play a role in adaptive NK cell response to viral infection. Upon MHC-E-peptide binding, transmits intracellular signals via the adapter protein TYROBP/DAP12, triggering the phosphorylation of proximal signaling molecules and cell activation. This is Natural killer cells antigen CD94 (Klrd1) from Mus musculus (Mouse).